Consider the following 312-residue polypeptide: Glyoxylate/hydroxypyruvate reductase A (312 aa).

Residue Arg227 is part of the active site. The active-site Proton donor is the His275.

It belongs to the D-isomer specific 2-hydroxyacid dehydrogenase family. GhrA subfamily.

It is found in the cytoplasm. The catalysed reaction is glycolate + NADP(+) = glyoxylate + NADPH + H(+). It catalyses the reaction (R)-glycerate + NAD(+) = 3-hydroxypyruvate + NADH + H(+). It carries out the reaction (R)-glycerate + NADP(+) = 3-hydroxypyruvate + NADPH + H(+). In terms of biological role, catalyzes the NADPH-dependent reduction of glyoxylate and hydroxypyruvate into glycolate and glycerate, respectively. The polypeptide is Glyoxylate/hydroxypyruvate reductase A (Salmonella paratyphi B (strain ATCC BAA-1250 / SPB7)).